Reading from the N-terminus, the 2188-residue chain is Genome polyprotein (2188 aa).

The Cell attachment site signature appears at 772-774 (RGD). The region spanning 795-889 (LAYLDRGFYK…DIFGTHTLSQ (95 aa)) is the LRAT domain. The active-site For protein 2A H-NC is His805. The active-site For protein 2A H-NC; Acyl-thioester intermediate is Cys874. Residues 1165 to 1326 (FQELARIPNR…KAYSKSGKLN (162 aa)) form the SF3 helicase domain. 1193–1200 (GEPGQGKS) is an ATP binding site. Residue Tyr1502 is modified to O-(5'-phospho-RNA)-tyrosine. In terms of domain architecture, Peptidase C3 spans 1526–1716 (APYDGQLEHI…IPFNFLKNDM (191 aa)). Catalysis depends on for protease 3C activity residues His1566, Asp1604, and Cys1678. Cys1905 serves as the catalytic Acyl-thioester intermediate. A RdRp catalytic domain is found at 1953–2067 (DYNYEMDYSQ…SLDREIEPER (115 aa)). The Mg(2+) site is built by Asp1959 and Asp2053.

This sequence belongs to the picornaviruses polyprotein family. As to quaternary structure, interacts with capsid protein VP1 and capsid protein VP3 to form heterotrimeric protomers. Five protomers subsequently associate to form pentamers which serve as building blocks for the capsid. Interacts with capsid protein VP0, and capsid protein VP3 to form heterotrimeric protomers. Five protomers subsequently associate to form pentamers which serve as building blocks for the capsid. In terms of assembly, interacts with capsid protein VP0 and capsid protein VP1 to form heterotrimeric protomers. Five protomers subsequently associate to form pentamers which serve as building blocks for the capsid. As to quaternary structure, homohexamer; forms a hexameric ring structure with 6-fold symmetry characteristic of AAA+ ATPases. Homodimer. Interacts with host ACBD3. In terms of assembly, interacts with RNA-directed RNA polymerase. As to quaternary structure, interacts with Viral protein genome-linked. Requires Mg(2+) as cofactor. Post-translationally, VPg is uridylylated by the polymerase and is covalently linked to the 5'-end of genomic RNA. This uridylylated form acts as a nucleotide-peptide primer for the polymerase. In terms of processing, specific enzymatic cleavages yield mature proteins. All cleavages are catalyzed by P3C.

It is found in the virion. The protein resides in the host cytoplasm. The protein localises to the host nucleus. It localises to the host nucleolus. Its subcellular location is the host cytoplasmic vesicle membrane. The enzyme catalyses RNA(n) + a ribonucleoside 5'-triphosphate = RNA(n+1) + diphosphate. It catalyses the reaction a ribonucleoside 5'-triphosphate + H2O = a ribonucleoside 5'-diphosphate + phosphate + H(+). It carries out the reaction Selective cleavage of Gln-|-Gly bond in the poliovirus polyprotein. In other picornavirus reactions Glu may be substituted for Gln, and Ser or Thr for Gly.. In terms of biological role, forms an icosahedral capsid of pseudo T=3 symmetry together with capsid proteins VP1 and VP3. The capsid is 300 Angstroms in diameter, composed of 60 copies of each capsid protein and enclosing the viral positive strand RNA genome. Capsid proteins interact with host alpha-V/beta-3 integrin heterodimer to provide virion attachment target cell. This attachment induces virion internalization predominantly through clathrin-mediated endocytosis. Binds packaging signals present in the viral RNA. Its function is as follows. Forms an icosahedral capsid of pseudo T=3 symmetry together with capsid proteins VP0 and VP1. The capsid is 300 Angstroms in diameter, composed of 60 copies of each capsid protein and enclosing the viral positive strand RNA genome. Capsid proteins interact with host alpha-V/beta-3 integrin heterodimer to provide virion attachment target cell. This attachment induces virion internalization predominantly through clathrin-mediated endocytosis. Binds packaging signals present in the viral RNA. Functionally, forms an icosahedral capsid of pseudo T=3 symmetry together with capsid proteins VP0 and VP3. The capsid is 300 Angstroms in diameter, composed of 60 copies of each capsid protein and enclosing the viral positive strand RNA genome. Capsid proteins interact with host alpha-V/beta-3 integrin heterodimer to provide virion attachment target cell. This attachment induces virion internalization predominantly through clathrin-mediated endocytosis. Binds packaging signals present in the viral RNA. Is not a protease. In terms of biological role, plays an essential role in the virus replication cycle by acting as a viroporin. Creates a pore in the host endoplasmic reticulum and as a consequence releases Ca2+ in the cytoplasm of infected cell. In turn, high levels of cytoplasmic calcium may trigger membrane trafficking and transport of viral ER-associated proteins to viroplasms, sites of viral genome replication. Its function is as follows. Induces and associates with structural rearrangements of intracellular membranes. Displays RNA-binding, nucleotide binding and NTPase activities. May play a role in virion morphogenesis and viral RNA encapsidation by interacting with the capsid protein VP3. Functionally, localizes the viral replication complex to the surface of membranous vesicles. It inhibits host cell endoplasmic reticulum-to-Golgi apparatus transport and causes the disassembly of the Golgi complex, possibly through GBF1 interaction. This would result in depletion of MHC, trail receptors and IFN receptors at the host cell surface. Plays an essential role in viral RNA replication by recruiting ACBD3 and PI4KB at the viral replication sites, thereby allowing the formation of the rearranged membranous structures where viral replication takes place. Acts as a primer for viral RNA replication and remains covalently bound to viral genomic RNA. VPg is uridylylated prior to priming replication into VPg-pUpU. The VPg-pUpU is then used as primer on the genomic RNA poly(A) by the RNA-dependent RNA polymerase to replicate the viral genome. Following genome release from the infecting virion in the cytoplasm, the VPg-RNA linkage is probably removed by host TDP2. During the late stage of the replication cycle, host TDP2 is excluded from sites of viral RNA synthesis and encapsidation, allowing for the generation of progeny virions. In terms of biological role, cysteine protease that generates mature viral proteins from the precursor polyprotein. In addition to its proteolytic activity, it binds to viral RNA, and thus influences viral genome replication. RNA and substrate bind cooperatively to the protease. Its function is as follows. Replicates the viral genomic RNA on the surface of intracellular membranes. Covalently attaches UMP to a tyrosine of VPg, which is used to prime RNA synthesis. The positive stranded RNA genome is first replicated at virus induced membranous vesicles, creating a dsRNA genomic replication form. This dsRNA is then used as template to synthesize positive stranded RNA genomes. ss(+)RNA genomes are either translated, replicated or encapsidated. This chain is Genome polyprotein, found in Human parechovirus 5 (strain CT86-6760) (HPeV-5).